We begin with the raw amino-acid sequence, 392 residues long: Queuine tRNA-ribosyltransferase (392 aa).

Asp93 (proton acceptor) is an active-site residue. Substrate is bound by residues 93-97, Asp147, Gln189, and Gly216; that span reads DSGGY. Positions 247–253 are RNA binding; sequence GVGAPED. Asp266 (nucleophile) is an active-site residue. An RNA binding; important for wobble base 34 recognition region spans residues 271–275; the sequence is TRVAR. Positions 304, 306, 309, and 335 each coordinate Zn(2+).

The protein belongs to the queuine tRNA-ribosyltransferase family. Homodimer. Within each dimer, one monomer is responsible for RNA recognition and catalysis, while the other monomer binds to the replacement base PreQ1. Requires Zn(2+) as cofactor.

It carries out the reaction 7-aminomethyl-7-carbaguanine + guanosine(34) in tRNA = 7-aminomethyl-7-carbaguanosine(34) in tRNA + guanine. Its pathway is tRNA modification; tRNA-queuosine biosynthesis. Functionally, catalyzes the base-exchange of a guanine (G) residue with the queuine precursor 7-aminomethyl-7-deazaguanine (PreQ1) at position 34 (anticodon wobble position) in tRNAs with GU(N) anticodons (tRNA-Asp, -Asn, -His and -Tyr). Catalysis occurs through a double-displacement mechanism. The nucleophile active site attacks the C1' of nucleotide 34 to detach the guanine base from the RNA, forming a covalent enzyme-RNA intermediate. The proton acceptor active site deprotonates the incoming PreQ1, allowing a nucleophilic attack on the C1' of the ribose to form the product. After dissociation, two additional enzymatic reactions on the tRNA convert PreQ1 to queuine (Q), resulting in the hypermodified nucleoside queuosine (7-(((4,5-cis-dihydroxy-2-cyclopenten-1-yl)amino)methyl)-7-deazaguanosine). The protein is Queuine tRNA-ribosyltransferase of Dehalococcoides mccartyi (strain ATCC BAA-2100 / JCM 16839 / KCTC 5957 / BAV1).